The primary structure comprises 357 residues: S-adenosylmethionine:tRNA ribosyltransferase-isomerase (357 aa).

This sequence belongs to the QueA family. In terms of assembly, monomer.

The protein resides in the cytoplasm. It carries out the reaction 7-aminomethyl-7-carbaguanosine(34) in tRNA + S-adenosyl-L-methionine = epoxyqueuosine(34) in tRNA + adenine + L-methionine + 2 H(+). Its pathway is tRNA modification; tRNA-queuosine biosynthesis. Functionally, transfers and isomerizes the ribose moiety from AdoMet to the 7-aminomethyl group of 7-deazaguanine (preQ1-tRNA) to give epoxyqueuosine (oQ-tRNA). The protein is S-adenosylmethionine:tRNA ribosyltransferase-isomerase of Buchnera aphidicola subsp. Schizaphis graminum (strain Sg).